The chain runs to 130 residues: Histone H2A.1 (130 aa).

Residues 1–22 form a disordered region; it reads MSGGKGKAGSSEKASTSRSAKA. Ser-2 carries the N-acetylserine modification. Lys-5 and Lys-7 each carry N6-acetyllysine. Gln-105 bears the N5-methylglutamine mark. Ser-127 bears the Phosphoserine mark. The short motif at 127–128 is the [ST]-Q motif element; the sequence is SQ.

Belongs to the histone H2A family. The nucleosome is a histone octamer containing two molecules each of H2A, H2B, H3 and H4 assembled in one H3-H4 heterotetramer and two H2A-H2B heterodimers. The octamer wraps approximately 147 bp of DNA. Post-translationally, phosphorylated to form H2AS128ph (gamma-H2A) in response to DNA double-strand breaks (DSBs) generated by exogenous genotoxic agents and by stalled replication forks. Phosphorylation is dependent on the DNA damage checkpoint kinases MEC1/ATR and TEL1/ATM, spreads on either side of a detected DSB site and may mark the surrounding chromatin for recruitment of proteins required for DNA damage signaling and repair. Gamma-H2A is removed from the DNA prior to the strand invasion-primer extension step of the repair process and subsequently dephosphorylated. Dephosphorylation is necessary for efficient recovery from the DNA damage checkpoint. Acetylated by ESA1 to form H2AK4ac and H2AK7ac.

The protein resides in the nucleus. It localises to the chromosome. Functionally, core component of nucleosome which plays a central role in DNA double strand break (DSB) repair. Nucleosomes wrap and compact DNA into chromatin, limiting DNA accessibility to the cellular machineries which require DNA as a template. Histones thereby play a central role in transcription regulation, DNA repair, DNA replication and chromosomal stability. DNA accessibility is regulated via a complex set of post-translational modifications of histones, also called histone code, and nucleosome remodeling. The sequence is that of Histone H2A.1 (HTA1) from Lodderomyces elongisporus (strain ATCC 11503 / CBS 2605 / JCM 1781 / NBRC 1676 / NRRL YB-4239) (Yeast).